A 64-amino-acid chain; its full sequence is Large ribosomal subunit protein bL35 (64 aa).

This sequence belongs to the bacterial ribosomal protein bL35 family.

This Ureaplasma parvum serovar 3 (strain ATCC 27815 / 27 / NCTC 11736) protein is Large ribosomal subunit protein bL35.